Reading from the N-terminus, the 525-residue chain is GMP synthase [glutamine-hydrolyzing] (525 aa).

A Glutamine amidotransferase type-1 domain is found at 9 to 207 (RILILDFGSQ…VRDICQCEAL (199 aa)). Cys86 (nucleophile) is an active-site residue. Residues His181 and Glu183 contribute to the active site. One can recognise a GMPS ATP-PPase domain in the interval 208-400 (WTPAKIIDDA…LGLPYDMLYR (193 aa)). 235-241 (SGGVDSS) is a binding site for ATP.

As to quaternary structure, homodimer.

The catalysed reaction is XMP + L-glutamine + ATP + H2O = GMP + L-glutamate + AMP + diphosphate + 2 H(+). Its pathway is purine metabolism; GMP biosynthesis; GMP from XMP (L-Gln route): step 1/1. Its function is as follows. Catalyzes the synthesis of GMP from XMP. The polypeptide is GMP synthase [glutamine-hydrolyzing] (Shigella boydii serotype 4 (strain Sb227)).